A 525-amino-acid chain; its full sequence is GMP synthase [glutamine-hydrolyzing] (525 aa).

The Glutamine amidotransferase type-1 domain maps to Arg9–Leu207. The Nucleophile role is filled by Cys86. Active-site residues include His181 and Glu183. The region spanning Trp208 to Arg400 is the GMPS ATP-PPase domain. Ser235–Ser241 provides a ligand contact to ATP.

As to quaternary structure, homodimer.

The catalysed reaction is XMP + L-glutamine + ATP + H2O = GMP + L-glutamate + AMP + diphosphate + 2 H(+). Its pathway is purine metabolism; GMP biosynthesis; GMP from XMP (L-Gln route): step 1/1. Functionally, catalyzes the synthesis of GMP from XMP. The sequence is that of GMP synthase [glutamine-hydrolyzing] from Pseudomonas fluorescens (strain Pf0-1).